The chain runs to 177 residues: Glutathione peroxidase homolog (177 aa).

Residue cysteine 35 is part of the active site.

Belongs to the glutathione peroxidase family.

Its function is as follows. Important in the cellular metabolism or defense processes particular to this pathogen. This chain is Glutathione peroxidase homolog (gpxA), found in Neisseria meningitidis serogroup A / serotype 4A (strain DSM 15465 / Z2491).